The primary structure comprises 348 residues: Sulfate/thiosulfate import ATP-binding protein CysA (348 aa).

The 235-residue stretch at Ile-3–Val-237 folds into the ABC transporter domain. Gly-35–Thr-42 lines the ATP pocket.

This sequence belongs to the ABC transporter superfamily. Sulfate/tungstate importer (TC 3.A.1.6) family. In terms of assembly, the complex is composed of two ATP-binding proteins (CysA), two transmembrane proteins (CysT and CysW) and a solute-binding protein (CysP).

The protein localises to the cell inner membrane. It catalyses the reaction sulfate(out) + ATP + H2O = sulfate(in) + ADP + phosphate + H(+). It carries out the reaction thiosulfate(out) + ATP + H2O = thiosulfate(in) + ADP + phosphate + H(+). In terms of biological role, part of the ABC transporter complex CysAWTP involved in sulfate/thiosulfate import. Responsible for energy coupling to the transport system. This chain is Sulfate/thiosulfate import ATP-binding protein CysA, found in Xylella fastidiosa (strain 9a5c).